The sequence spans 134 residues: Small ribosomal subunit protein uS12 (134 aa).

The interval 1–26 (MPTTQQLLRKGRTTLQKKSKVPALKG) is disordered. Basic residues predominate over residues 9–20 (RKGRTTLQKKSK). Position 89 is a 3-methylthioaspartic acid (Asp89). The segment at 103 to 134 (DTQGVKDRNKSRSKYGTKKPKAGAAAAGAKKK) is disordered. The segment covering 113 to 123 (SRSKYGTKKPK) has biased composition (basic residues). Over residues 124–134 (AGAAAAGAKKK) the composition is skewed to low complexity.

It belongs to the universal ribosomal protein uS12 family. As to quaternary structure, part of the 30S ribosomal subunit. Contacts proteins S8 and S17. May interact with IF1 in the 30S initiation complex.

In terms of biological role, with S4 and S5 plays an important role in translational accuracy. Interacts with and stabilizes bases of the 16S rRNA that are involved in tRNA selection in the A site and with the mRNA backbone. Located at the interface of the 30S and 50S subunits, it traverses the body of the 30S subunit contacting proteins on the other side and probably holding the rRNA structure together. The combined cluster of proteins S8, S12 and S17 appears to hold together the shoulder and platform of the 30S subunit. The protein is Small ribosomal subunit protein uS12 of Deinococcus geothermalis (strain DSM 11300 / CIP 105573 / AG-3a).